We begin with the raw amino-acid sequence, 376 residues long: Putative glutamate--cysteine ligase 2-1 (376 aa).

This sequence belongs to the glutamate--cysteine ligase type 2 family. YbdK subfamily.

The enzyme catalyses L-cysteine + L-glutamate + ATP = gamma-L-glutamyl-L-cysteine + ADP + phosphate + H(+). In terms of biological role, ATP-dependent carboxylate-amine ligase which exhibits weak glutamate--cysteine ligase activity. The chain is Putative glutamate--cysteine ligase 2-1 from Rubrobacter xylanophilus (strain DSM 9941 / JCM 11954 / NBRC 16129 / PRD-1).